Here is a 134-residue protein sequence, read N- to C-terminus: Small ribosomal subunit protein uS8c (134 aa).

The protein belongs to the universal ribosomal protein uS8 family. In terms of assembly, part of the 30S ribosomal subunit.

It localises to the plastid. It is found in the chloroplast. In terms of biological role, one of the primary rRNA binding proteins, it binds directly to 16S rRNA central domain where it helps coordinate assembly of the platform of the 30S subunit. This chain is Small ribosomal subunit protein uS8c (rps8), found in Bigelowiella natans (Pedinomonas minutissima).